We begin with the raw amino-acid sequence, 827 residues long: Mitogen-activated protein kinase kinase kinase kinase 1 (827 aa).

The Protein kinase domain maps to 17–274 (YDLLQRLGGG…ATKMLSHQLV (258 aa)). Residues 23 to 31 (LGGGTYGEV) and Lys-46 contribute to the ATP site. Asp-137 functions as the Proton acceptor in the catalytic mechanism. Thr-165 bears the Phosphothreonine; by autocatalysis mark. Ser-171 bears the Phosphoserine; by autocatalysis mark. Phosphothreonine; by autocatalysis is present on Thr-175. Positions 296–315 (KGLPVDIEDEEPEPPPAIPR) are disordered. Position 354 is a phosphothreonine; by autocatalysis (Thr-354). Positions 359-485 (PPAHFGSTSP…KMRGKMENEK (127 aa)) are disordered. Phosphoserine occurs at positions 373, 375, 403, 405, and 419. Residues 374–383 (DSDDDYDDVD) show a composition bias toward acidic residues. 2 stretches are compositionally biased toward pro residues: residues 429–443 (GPPP…PPAT) and 461–471 (APEPGQPPLVP). Basic and acidic residues predominate over residues 472 to 485 (PRKEKMRGKMENEK). In terms of domain architecture, CNH spans 501–806 (PLQIHSTAAW…TFRLLCSPRP (306 aa)). At Ser-592 the chain carries Phosphoserine.

It belongs to the protein kinase superfamily. STE Ser/Thr protein kinase family. STE20 subfamily. In terms of assembly, interacts with MAP3K1. Interacts with FBXW8. Interacts with CLNK (via its SH2 domain). It depends on Mg(2+) as a cofactor. In terms of processing, autophosphorylates: phosphorylation promotes ubiquitination by the Cul7-RING(FBXW8) ubiquitin-protein ligase complex, leading to its degradation by the proteasome. Post-translationally, tyrosine-phosphorylated after activation of hemopoietic cells. Ubiquitinated by the Cul7-RING(FBXW8) ubiquitin-protein ligase complex following autophosphorylation, leading to its degradation by the proteasome. As to expression, expressed in hemopoietic cells (at protein level). Ubiquitously expressed in all tissues examined at embryonic stage 16.5 dpc with high levels in lung, heart and fetal liver. In the neonate, expression is restricted to the tissues which undergo lineage decisions, lung, thymus, liver, kidney and brain. In the adult, expression is limited to hemopoietic organs, thymus, bone marrow, and spleen and to the testis.

The enzyme catalyses L-seryl-[protein] + ATP = O-phospho-L-seryl-[protein] + ADP + H(+). It carries out the reaction L-threonyl-[protein] + ATP = O-phospho-L-threonyl-[protein] + ADP + H(+). Its function is as follows. Serine/threonine-protein kinase, which plays a role in the response to environmental stress. Appears to act upstream of the JUN N-terminal pathway. Activator of the Hippo signaling pathway which plays a pivotal role in organ size control and tumor suppression by restricting proliferation and promoting apoptosis. MAP4Ks act in parallel to and are partially redundant with STK3/MST2 and STK4/MST2 in the phosphorylation and activation of LATS1/2, and establish MAP4Ks as components of the expanded Hippo pathway. May play a role in hematopoietic lineage decisions and growth regulation. Together with CLNK, it enhances CD3-triggered activation of T-cells and subsequent IL2 production. This is Mitogen-activated protein kinase kinase kinase kinase 1 (Map4k1) from Mus musculus (Mouse).